A 178-amino-acid polypeptide reads, in one-letter code: Fluoride-specific ion channel FluC 2 (178 aa).

4 helical membrane-spanning segments follow: residues 25 to 45 (PDIHLDIVLVVFCGGAIGTAI), 63 to 83 (FVANMLACFCYAGLTAYLAGA), 97 to 117 (GLGMGVCGGLSTMSTLALEGF), and 129 to 149 (IAYLLVTFALGLVCASAGVWA). The Na(+) site is built by Gly104 and Ser107.

This sequence belongs to the fluoride channel Fluc/FEX (TC 1.A.43) family.

It is found in the cell membrane. It catalyses the reaction fluoride(in) = fluoride(out). With respect to regulation, na(+) is not transported, but it plays an essential structural role and its presence is essential for fluoride channel function. Its function is as follows. Fluoride-specific ion channel. Important for reducing fluoride concentration in the cell, thus reducing its toxicity. This is Fluoride-specific ion channel FluC 2 from Bifidobacterium longum (strain NCC 2705).